The primary structure comprises 429 residues: Serine--tRNA ligase (429 aa).

235 to 237 is a binding site for L-serine; sequence TAE. ATP is bound at residue 266 to 268; the sequence is RSE. Residue Glu289 participates in L-serine binding. 353 to 356 is a binding site for ATP; the sequence is EISS. Ser389 contributes to the L-serine binding site.

It belongs to the class-II aminoacyl-tRNA synthetase family. Type-1 seryl-tRNA synthetase subfamily. In terms of assembly, homodimer. The tRNA molecule binds across the dimer.

The protein resides in the cytoplasm. It carries out the reaction tRNA(Ser) + L-serine + ATP = L-seryl-tRNA(Ser) + AMP + diphosphate + H(+). The enzyme catalyses tRNA(Sec) + L-serine + ATP = L-seryl-tRNA(Sec) + AMP + diphosphate + H(+). Its pathway is aminoacyl-tRNA biosynthesis; selenocysteinyl-tRNA(Sec) biosynthesis; L-seryl-tRNA(Sec) from L-serine and tRNA(Sec): step 1/1. Catalyzes the attachment of serine to tRNA(Ser). Is also able to aminoacylate tRNA(Sec) with serine, to form the misacylated tRNA L-seryl-tRNA(Sec), which will be further converted into selenocysteinyl-tRNA(Sec). In Haemophilus influenzae (strain PittEE), this protein is Serine--tRNA ligase.